Here is a 1262-residue protein sequence, read N- to C-terminus: Synaptopodin-2 (1262 aa).

Residues 1–174 (MGTGDFICIS…PGSQEGHLVE (174 aa)) are interaction with VPS18. In terms of domain architecture, PDZ spans 6-88 (FICISMTGGA…SLHLLIKRPT (83 aa)). 2 stretches are compositionally biased toward polar residues: residues 89-105 (SGTSEALDSETENTNHQ) and 246-260 (TSLTSGTTVQTSSGR). 2 disordered regions span residues 89–114 (SGTSEALDSETENTNHQHLPHGGPME) and 239–276 (PAPEKADTSLTSGTTVQTSSGRELTVIQGRDPGGTGLP). A phosphoserine mark is found at S304, S323, and S324. Residues 323-363 (SSEGTEQGEDQRSGKDQGRPHKHRARHARLRRSESLSEKQV) form a disordered region. T327 carries the post-translational modification Phosphothreonine. Residues 331–341 (EDQRSGKDQGR) are compositionally biased toward basic and acidic residues. Residues 342–352 (PHKHRARHARL) are compositionally biased toward basic residues. Residues 353–363 (RRSESLSEKQV) show a composition bias toward basic and acidic residues. The Nuclear localization signal signature appears at 392–400 (KKRRRRARK). Interaction with ACTN2 regions lie at residues 477–658 (MEML…FYDS), 659–922 (SEQI…PPVA), and 899–1153 (QSPT…NIEE). Disordered regions lie at residues 503-576 (AQNE…GPQR) and 592-703 (NQTA…SPNP). Residues S518, S543, S544, S546, and S549 each carry the phosphoserine modification. F-actin binding regions lie at residues 530-658 (TSYQ…FYDS) and 659-801 (SEQI…VTAV). Positions 540 to 552 (RMQSSVSESSFQM) are enriched in low complexity. Residues 554–560 (RSLGSVP) are interaction with YWHAB. Residue S558 is modified to Phosphoserine; by PKA. Composition is skewed to polar residues over residues 558–569 (SVPQQNGFSGVS) and 592–606 (NQTAAPFSPTQSVTS). S599 is subject to Phosphoserine. The tract at residues 602–809 (QSVTSPIPDF…AVSSIKIAQP (208 aa)) is interaction with YWHAB. A Phosphothreonine; by PKA and CaMK2 modification is found at T605. S606 bears the Phosphoserine mark. Composition is skewed to pro residues over residues 609-625 (PDFPAPPPYSAVSPPPE) and 639-650 (AQPPPWPQPAPW). The segment at 610–621 (DFPAPPPYSAVS) is interaction with BAG3. A PPPY motif motif is present at residues 614–617 (PPPY). Position 617 is a phosphotyrosine (Y617). S621 carries the phosphoserine modification. Residues 659-914 (SEQIASRDER…LPASWKYSSN (256 aa)) are F-actin bundling activity. Residues S700 and S724 each carry the phosphoserine modification. Disordered regions lie at residues 741–799 (MQSS…PQVT) and 833–868 (VVSHNYTPKPSAPTPLVNAAPAGAGGPSNELPGMSG). The interval 745 to 898 (AKQKTPPPVA…DTVQAHTVRA (154 aa)) is actin binding. Position 749 is a phosphothreonine (T749). The span at 756 to 782 (KPAVKTSSSSQPVAPVSPVWSPGVAPA) shows a compositional bias: low complexity. Phosphoserine occurs at positions 772 and 776. The span at 786-799 (AFSTTNPPNPPQVT) shows a compositional bias: polar residues. The interaction with FLNC stretch occupies residues 808–1153 (QPTCPPARPA…EAFRPRNIEE (346 aa)). Phosphoserine is present on residues S900, S904, and S908. The interval 933–957 (LAAIKSQPPGAQASKTSKKKGKKPL) is disordered. The segment at 999–1018 (PAMKQALPPRQADIGSPTNA) is interaction with ZYX. A phosphoserine mark is found at S1014, S1055, and S1090.

Belongs to the synaptopodin family. In terms of assembly, may self-associate in muscle cells under oxidative stress. Binds F-actin. Interacts with ACTN2; ACTN2 is proposed to anchor SYOP2 at Z lines in mature myocytes. Interacts with AKAP6, PPP3CA and CAMK2A. Interacts (phosphorylated form) with YWHAB; YWHAB competes with ACTN2 for interaction with SYNPO2. Interacts with KPNA2; mediating nuclear import of SYNOP2; dependent on interaction with YWHAB. Interacts with IPO13; may be implicated in SYNOP2 nuclear import. Interacts with ZYX, FLNC, ILK. Interacts with BAG3 (via WW 1 domain). May associate with the CASA complex consisting of HSPA8, HSPB8 and BAG3. Interacts with VPS18. In terms of processing, phosphorylated by PKA, and by CaMK2 at multiple sites. Dephosphorylated by calcineurin at Ser-558 and Thr-605; abrogating interaction with YWHAB and impairing nuclear import.

Its subcellular location is the nucleus. It localises to the cytoplasm. The protein localises to the cytoskeleton. The protein resides in the myofibril. It is found in the sarcomere. Its subcellular location is the z line. It localises to the cell junction. The protein localises to the focal adhesion. Its function is as follows. Has an actin-binding and actin-bundling activity. Can induce the formation of F-actin networks. At the sarcomeric Z lines is proposed to act as adapter protein that links nascent myofibers to the sarcolemma via ZYX and may play a role in early assembly and stabilization of the Z lines. Involved in autophagosome formation. May play a role in chaperone-assisted selective autophagy (CASA) involved in Z lines maintenance in striated muscle under mechanical tension; may link the client-processing CASA chaperone machinery to a membrane-tethering and fusion complex providing autophagosome membranes. Involved in regulation of cell migration. May be a tumor suppressor. The chain is Synaptopodin-2 (Synpo2) from Rattus norvegicus (Rat).